Consider the following 205-residue polypeptide: Large ribosomal subunit protein uL4 (205 aa).

The interval 43 to 77 (RRRSGTASTKGRSDVAGSRAKLFRQKGTGRARRGD) is disordered. The segment covering 63-73 (KLFRQKGTGRA) has biased composition (basic residues).

It belongs to the universal ribosomal protein uL4 family. In terms of assembly, part of the 50S ribosomal subunit.

One of the primary rRNA binding proteins, this protein initially binds near the 5'-end of the 23S rRNA. It is important during the early stages of 50S assembly. It makes multiple contacts with different domains of the 23S rRNA in the assembled 50S subunit and ribosome. Functionally, forms part of the polypeptide exit tunnel. The protein is Large ribosomal subunit protein uL4 of Desulfosudis oleivorans (strain DSM 6200 / JCM 39069 / Hxd3) (Desulfococcus oleovorans).